The following is a 753-amino-acid chain: Striatin-4 (753 aa).

The interval 10 to 65 is disordered; sequence VAAAASSCRPLGSGAGPGPTGAAPVSAPAPGPGPAGKGGGGGGSPGPTAGPEPLSL. Residues 43–54 are compositionally biased toward gly residues; the sequence is PAGKGGGGGGSP. Serine 53 bears the Phosphoserine mark. Residues 69–136 adopt a coiled-coil conformation; it reads LHFIQHEWAR…QERAKYHKLK (68 aa). The caveolin-binding stretch occupies residues 71–79; sequence FIQHEWARF. A calmodulin-binding region spans residues 165 to 182; that stretch reads ENSPLVWKEGRQLLRQYL. A Phosphoserine modification is found at serine 206. Disordered stretches follow at residues 213 to 232, 271 to 345, and 363 to 382; these read VEPS…LSGG, CEDE…SPHE, and VDGL…QPRP. 2 stretches are compositionally biased toward acidic residues: residues 271–283 and 302–317; these read CEDE…DELD and EMED…DAIN. Serine 276 is modified (phosphoserine). A compositionally biased stretch (basic and acidic residues) spans 332–345; the sequence is PDPRRCTVDGSPHE. Over residues 370-380 the composition is skewed to pro residues; it reads VTGPPPGTPQP. WD repeat units follow at residues 436 to 475, 489 to 528, 542 to 581, 587 to 628, 635 to 674, 677 to 716, and 723 to 753; these read SHYD…TAKK, AHRG…MDPY, GHGD…PACL, ASEH…ALLT, SGPT…PVHS, AHLD…CVQE, and KHEE…KVFV.

The protein belongs to the WD repeat striatin family. As to quaternary structure, part of the core of STRIPAK complexes composed of PP2A catalytic and scaffolding subunits, the striatins (PP2A regulatory subunits), the striatin-associated proteins MOB4, STRIP1 and STRIP2, PDCD10 and members of the STE20 kinases, such as STK24 and STK26. Interacts with CTTNBP2NL.

The protein resides in the cytoplasm. In terms of biological role, calmodulin-binding scaffolding protein which is the center of the striatin-interacting phosphatase and kinase (STRIPAK) complexes. STRIPAK complexes have critical roles in protein (de)phosphorylation and are regulators of multiple signaling pathways including Hippo, MAPK, nuclear receptor and cytoskeleton remodeling. Different types of STRIPAK complexes are involved in a variety of biological processes such as cell growth, differentiation, apoptosis, metabolism and immune regulation. Key regulator of the expanded Hippo signaling pathway by interacting and allowing the inhibition of MAP4K kinases by the STRIPAK complex. This is Striatin-4 from Homo sapiens (Human).